Here is a 169-residue protein sequence, read N- to C-terminus: Ribosome maturation factor RimM (169 aa).

The PRC barrel domain occupies 92–166 (NKEYYWNDIF…IVIDLTNLNN (75 aa)).

It belongs to the RimM family. In terms of assembly, binds ribosomal protein uS19.

It localises to the cytoplasm. Its function is as follows. An accessory protein needed during the final step in the assembly of 30S ribosomal subunit, possibly for assembly of the head region. Essential for efficient processing of 16S rRNA. May be needed both before and after RbfA during the maturation of 16S rRNA. It has affinity for free ribosomal 30S subunits but not for 70S ribosomes. The chain is Ribosome maturation factor RimM from Buchnera aphidicola subsp. Cinara cedri (strain Cc).